The chain runs to 257 residues: Glutamate racemase (257 aa).

Substrate contacts are provided by residues 12 to 13 and 44 to 45; these read DS and YG. Cys75 functions as the Proton donor/acceptor in the catalytic mechanism. 76–77 is a substrate binding site; that stretch reads NT. The active-site Proton donor/acceptor is Cys176. Residue 177–178 coordinates substrate; the sequence is TH.

This sequence belongs to the aspartate/glutamate racemases family.

The catalysed reaction is L-glutamate = D-glutamate. It functions in the pathway cell wall biogenesis; peptidoglycan biosynthesis. Provides the (R)-glutamate required for cell wall biosynthesis. The sequence is that of Glutamate racemase from Thermus thermophilus (strain ATCC BAA-163 / DSM 7039 / HB27).